Reading from the N-terminus, the 275-residue chain is MVHDLLRDRADLEARWNPSAYMQFARLRQRPVVELLDHIEPCCPERIYDLGCGTGIATELLARRWPLAELYGVDSSVEMLEEAARLPIKASWERANLRHWCAERPASLLFAAAVLHFLEDHGKLLPRLLGQLTPGGCLAAHMPNWRDASWYRLMLDALDSAGPGGASLGSPALRYRLHRRNVLSLDNYYRLLAPLTAELDIWETEYLQVVDGNDPIFDWIKVSALRPVLGELDEEARRRFLDRYLELLHRHYPRELDGRTLFPFRRVFIVASLGR.

This sequence belongs to the methyltransferase superfamily. Tam family.

It is found in the cytoplasm. The catalysed reaction is trans-aconitate + S-adenosyl-L-methionine = (E)-3-(methoxycarbonyl)pent-2-enedioate + S-adenosyl-L-homocysteine. Functionally, catalyzes the S-adenosylmethionine monomethyl esterification of trans-aconitate. This Pseudomonas aeruginosa (strain ATCC 15692 / DSM 22644 / CIP 104116 / JCM 14847 / LMG 12228 / 1C / PRS 101 / PAO1) protein is Trans-aconitate 2-methyltransferase.